The sequence spans 486 residues: UDP-N-acetylmuramoyl-L-alanyl-D-glutamate--2,6-diaminopimelate ligase (486 aa).

Residue S33 participates in UDP-N-acetyl-alpha-D-muramoyl-L-alanyl-D-glutamate binding. Position 110-116 (G110–S116) interacts with ATP. UDP-N-acetyl-alpha-D-muramoyl-L-alanyl-D-glutamate contacts are provided by residues T152–T153, S179, Q185, and R187. At K219 the chain carries N6-carboxylysine. Residues R383, D407 to R410, G455, and E459 each bind meso-2,6-diaminopimelate. The Meso-diaminopimelate recognition motif signature appears at D407–R410.

This sequence belongs to the MurCDEF family. MurE subfamily. Mg(2+) serves as cofactor. Post-translationally, carboxylation is probably crucial for Mg(2+) binding and, consequently, for the gamma-phosphate positioning of ATP.

It is found in the cytoplasm. The enzyme catalyses UDP-N-acetyl-alpha-D-muramoyl-L-alanyl-D-glutamate + meso-2,6-diaminopimelate + ATP = UDP-N-acetyl-alpha-D-muramoyl-L-alanyl-gamma-D-glutamyl-meso-2,6-diaminopimelate + ADP + phosphate + H(+). The protein operates within cell wall biogenesis; peptidoglycan biosynthesis. Functionally, catalyzes the addition of meso-diaminopimelic acid to the nucleotide precursor UDP-N-acetylmuramoyl-L-alanyl-D-glutamate (UMAG) in the biosynthesis of bacterial cell-wall peptidoglycan. In Zymomonas mobilis subsp. mobilis (strain ATCC 31821 / ZM4 / CP4), this protein is UDP-N-acetylmuramoyl-L-alanyl-D-glutamate--2,6-diaminopimelate ligase.